The sequence spans 224 residues: Small ribosomal subunit protein uS3 (224 aa).

The 70-residue stretch at 20 to 89 folds into the KH type-2 domain; it reads LDEFLANYFK…NVNITVSPVP (70 aa).

It belongs to the universal ribosomal protein uS3 family. Part of the 30S ribosomal subunit.

Functionally, binds the lower part of the 30S subunit head. This is Small ribosomal subunit protein uS3 from Staphylothermus marinus (strain ATCC 43588 / DSM 3639 / JCM 9404 / F1).